The primary structure comprises 89 residues: Small ribosomal subunit protein uS15 (89 aa).

It belongs to the universal ribosomal protein uS15 family. As to quaternary structure, part of the 30S ribosomal subunit. Forms a bridge to the 50S subunit in the 70S ribosome, contacting the 23S rRNA.

In terms of biological role, one of the primary rRNA binding proteins, it binds directly to 16S rRNA where it helps nucleate assembly of the platform of the 30S subunit by binding and bridging several RNA helices of the 16S rRNA. Forms an intersubunit bridge (bridge B4) with the 23S rRNA of the 50S subunit in the ribosome. The protein is Small ribosomal subunit protein uS15 of Desulfosudis oleivorans (strain DSM 6200 / JCM 39069 / Hxd3) (Desulfococcus oleovorans).